The sequence spans 139 residues: Ribonuclease VapC3 (139 aa).

In terms of domain architecture, PINc spans 14–121; the sequence is EAIVLDTGAF…VATDDYTLQR (108 aa). Residue Asp19 coordinates Mg(2+).

This sequence belongs to the PINc/VapC protein family. Mg(2+) is required as a cofactor.

Toxic component of a type II toxin-antitoxin (TA) system. An RNase. The protein is Ribonuclease VapC3 of Aeropyrum pernix (strain ATCC 700893 / DSM 11879 / JCM 9820 / NBRC 100138 / K1).